Reading from the N-terminus, the 335-residue chain is Large ribosomal subunit protein uL10 (335 aa).

The segment at 304-335 (GAAAPVEEAPVEEKKEEKKEEAAAPAGLGMLF) is disordered. Basic and acidic residues predominate over residues 314-325 (VEEKKEEKKEEA).

This sequence belongs to the universal ribosomal protein uL10 family. In terms of assembly, part of the 50S ribosomal subunit. Homodimer, it forms part of the ribosomal stalk which helps the ribosome interact with GTP-bound translation factors. Forms both a pentameric L10(L12)2(L12)2 and heptameric L10(L12)2(L12)2(L12)2 complex, where L10 forms an elongated spine to which the L12 dimers bind in a sequential fashion. The proportion of heptameric complexes increases during cell growth.

In terms of biological role, forms part of the ribosomal stalk, playing a central role in the interaction of the ribosome with GTP-bound translation factors. The sequence is that of Large ribosomal subunit protein uL10 from Methanococcus maripaludis (strain DSM 14266 / JCM 13030 / NBRC 101832 / S2 / LL).